The primary structure comprises 225 residues: Glutathione s-transferase kappa 2 (225 aa).

Glutathione-binding positions include 15–17 (SPY), Asn52, and 200–201 (SD).

Belongs to the GST superfamily. Kappa family. In terms of tissue distribution, expressed in the pharynx, body wall muscles and epidermis. Weaker expression is seen in the intestine.

The protein localises to the mitochondrion. The enzyme catalyses RX + glutathione = an S-substituted glutathione + a halide anion + H(+). Its function is as follows. Has roles in respiratory and lipid metabolism. This Caenorhabditis elegans protein is Glutathione s-transferase kappa 2 (gstk-2).